A 212-amino-acid chain; its full sequence is Large ribosomal subunit protein uL3 (212 aa).

Positions 133–156 (SMTHGSKNHRLPGSTGAGTTPGRV) are disordered.

Belongs to the universal ribosomal protein uL3 family. In terms of assembly, part of the 50S ribosomal subunit. Forms a cluster with proteins L14 and L19.

One of the primary rRNA binding proteins, it binds directly near the 3'-end of the 23S rRNA, where it nucleates assembly of the 50S subunit. The sequence is that of Large ribosomal subunit protein uL3 from Crocosphaera subtropica (strain ATCC 51142 / BH68) (Cyanothece sp. (strain ATCC 51142)).